The chain runs to 140 residues: MRTSVFVALVVATFVATCISFTSAKNVAQIRDVDGGNNVQETRTLAEADDWWLASTNTEERSGGAGFFSKLRGKVHAKQSSGVMTTQKLNDQQVKTITKEVATTVKKDRRTWPMIKKGLKILYGALLAGLIIVGVEAMLS.

The N-terminal stretch at 1–24 (MRTSVFVALVVATFVATCISFTSA) is a signal peptide. A RxLR-dEER motif is present at residues 43-61 (RTLAEADDWWLASTNTEER). Residues 119–139 (LKILYGALLAGLIIVGVEAML) form a helical membrane-spanning segment.

It belongs to the RxLR effector family.

The protein resides in the secreted. It is found in the host cell. Its subcellular location is the membrane. Effector that is involved in host plant infection. Contributes to virulence during the early infection stage, by inhibiting plant defense responses induced by both PAMP-triggered immunity (PTI) and effector-triggered immunity (ETI). In Phytophthora infestans (strain T30-4) (Potato late blight agent), this protein is RxLR effector protein CRE9.